The following is a 353-amino-acid chain: WD repeat-containing protein 55 (353 aa).

7 WD repeats span residues 4–43 (DLGA…SLVR), 49–88 (AHKE…QVAH), 92–130 (AHED…CSHE), 133–172 (AHED…VQSQ), 175–214 (FSED…DCSD), 218–257 (DLAP…IIQP), and 260–299 (SHDY…EGSN). Residues 300–353 (VNSGNASGAAEDSDSDNDGMDLDNDPSKSSKGSKRKTKSKANTLNATNNFFADL) are disordered. Residues 310–323 (EDSDSDNDGMDLDN) are compositionally biased toward acidic residues. Low complexity predominate over residues 339–353 (KANTLNATNNFFADL).

It belongs to the WD repeat WDR55 family. Interacts with DDB1A. As to expression, highly expressed in roots. Expressed in cotyledons, leaves, buds and flowers.

It localises to the nucleus. The protein localises to the cytoplasm. Functionally, required for male and female gametogenesis, seed development, and embryo and endosperm development at early stages. Involved in the establishment of bilateral symmetry in the transition from the globular to the heart embryo stage. May act in the frame of a CRL4 complex. Required for proper vegetative growth and organization of the adult plant body. May play a role in hormonal control of plant development. The polypeptide is WD repeat-containing protein 55 (Arabidopsis thaliana (Mouse-ear cress)).